Here is a 536-residue protein sequence, read N- to C-terminus: DEAD-box ATP-dependent RNA helicase 26 (536 aa).

The tract at residues 1–44 is disordered; sequence MMSGGPSDATHRKRRRRRGPKGSGVDGPSIPRAVTTNGAGPEEE. The span at 11-20 shows a compositional bias: basic residues; that stretch reads HRKRRRRRGP. Residues 74 to 102 carry the Q motif motif; the sequence is TRFDQCPVSPLSLKAIKDAGYEKMTQVQE. The Helicase ATP-binding domain maps to 105–282; sequence LPIILQGEDV…HIAMKRGYKF (178 aa). Residue 118–125 coordinates ATP; sequence AKTGTGKT. Residues 230-233 carry the DEAD box motif; that stretch reads DEAD. In terms of domain architecture, Helicase C-terminal spans 316-466; it reads VLKKHIAEDA…SIQTGVKDAL (151 aa).

The protein belongs to the DEAD box helicase family.

The enzyme catalyses ATP + H2O = ADP + phosphate + H(+). This is DEAD-box ATP-dependent RNA helicase 26 from Oryza sativa subsp. japonica (Rice).